Here is a 524-residue protein sequence, read N- to C-terminus: Probable pectinesterase/pectinesterase inhibitor 19 (524 aa).

Residues 1 to 22 (MLVKVFSFFILMITMVVIGVSK) form the signal peptide. Residues 23-172 (EYCDDKQSCQ…ISRARIALAL (150 aa)) form a pectinesterase inhibitor 19 region. Residues 215–510 (DVVVAKDGTG…FTVAKLLDGE (296 aa)) are pectinesterase 19. N-linked (GlcNAc...) asparagine glycosylation is found at Asn-265 and Asn-281. Thr-290 contacts substrate. Asp-343 functions as the Proton donor; for pectinesterase activity in the catalytic mechanism. A disulfide bridge links Cys-357 with Cys-377. The active-site Nucleophile; for pectinesterase activity is Asp-364. A glycan (N-linked (GlcNAc...) asparagine) is linked at Asn-412. 2 residues coordinate substrate: Arg-430 and Trp-432.

This sequence in the N-terminal section; belongs to the PMEI family. In the C-terminal section; belongs to the pectinesterase family. As to expression, expressed in siliques, but not in flower buds.

The protein localises to the secreted. It localises to the cell wall. It catalyses the reaction [(1-&gt;4)-alpha-D-galacturonosyl methyl ester](n) + n H2O = [(1-&gt;4)-alpha-D-galacturonosyl](n) + n methanol + n H(+). The protein operates within glycan metabolism; pectin degradation; 2-dehydro-3-deoxy-D-gluconate from pectin: step 1/5. In terms of biological role, acts in the modification of cell walls via demethylesterification of cell wall pectin. This is Probable pectinesterase/pectinesterase inhibitor 19 (PME19) from Arabidopsis thaliana (Mouse-ear cress).